Reading from the N-terminus, the 160-residue chain is Small ribosomal subunit protein uS7 (160 aa).

The protein belongs to the universal ribosomal protein uS7 family. In terms of assembly, part of the 30S ribosomal subunit. Contacts proteins S9 and S11.

In terms of biological role, one of the primary rRNA binding proteins, it binds directly to 16S rRNA where it nucleates assembly of the head domain of the 30S subunit. Is located at the subunit interface close to the decoding center, probably blocks exit of the E-site tRNA. The protein is Small ribosomal subunit protein uS7 of Rickettsia conorii (strain ATCC VR-613 / Malish 7).